A 946-amino-acid polypeptide reads, in one-letter code: Protein translocase subunit SecA (946 aa).

Residues Q87, 105–109 (GEGKT), and D524 each bind ATP. The tract at residues 904–933 (PAQTTDKADRDPNKPETWGKVGRNEDCPCG) is disordered. Residues C930, C932, C941, and H942 each contribute to the Zn(2+) site.

It belongs to the SecA family. As to quaternary structure, monomer and homodimer. Part of the essential Sec protein translocation apparatus which comprises SecA, SecYEG and auxiliary proteins SecDF-YajC and YidC. The cofactor is Zn(2+).

It localises to the cell inner membrane. Its subcellular location is the cytoplasm. The enzyme catalyses ATP + H2O + cellular proteinSide 1 = ADP + phosphate + cellular proteinSide 2.. Its function is as follows. Part of the Sec protein translocase complex. Interacts with the SecYEG preprotein conducting channel. Has a central role in coupling the hydrolysis of ATP to the transfer of proteins into and across the cell membrane, serving both as a receptor for the preprotein-SecB complex and as an ATP-driven molecular motor driving the stepwise translocation of polypeptide chains across the membrane. In Rhodopseudomonas palustris (strain TIE-1), this protein is Protein translocase subunit SecA.